The sequence spans 32 residues: Secreted protein F2 (32 aa).

It localises to the secreted. The protein is Secreted protein F2 of Globisporangium hypogynum (Pythium hypogynum).